Here is a 587-residue protein sequence, read N- to C-terminus: Phosphatidylinositol-3-phosphatase SAC1 (587 aa).

Residues 1 to 520 (MAATAYEHLK…SPLSVPRDWK (520 aa)) are Cytoplasmic-facing. Residues 122–451 (LNHVLSTDGF…ANACAKQYAG (330 aa)) enclose the SAC domain. An essential for phosphatidylinositol-4-phosphate phosphatase activity region spans residues 452 to 587 (TGALKTDFTR…PRLVQKEKID (136 aa)). Residue lysine 456 is modified to N6-acetyllysine. Residues 521–541 (FLALPIIMVVAFSMCIICLLM) traverse the membrane as a helical segment. The Lumenal portion of the chain corresponds to 542 to 548 (AGDTWTE). Residues 549 to 569 (TLAYVLFWGVASIGTFFIILY) traverse the membrane as a helical segment. Residues 570 to 587 (NGKDFVDAPRLVQKEKID) lie on the Cytoplasmic side of the membrane.

Interacts with TMEM39A. Interacts with SEC23A and SEC24A; this interaction is reduced in the absence of TMEM39A. Interacts with PLEKHA3 and VAPA and/or VAPB to form a ternary complex. In terms of tissue distribution, detected in spleen, lung, liver, skeletal muscle, kidney, testis and in cerebellar Purkinje cells (at protein level). Ubiquitous. Highly expressed in brain, spleen, liver and kidney.

Its subcellular location is the endoplasmic reticulum membrane. It localises to the golgi apparatus membrane. It carries out the reaction a 1,2-diacyl-sn-glycero-3-phospho-(1D-myo-inositol-3-phosphate) + H2O = a 1,2-diacyl-sn-glycero-3-phospho-(1D-myo-inositol) + phosphate. It catalyses the reaction a 1,2-diacyl-sn-glycero-3-phospho-(1D-myo-inositol 4-phosphate) + H2O = a 1,2-diacyl-sn-glycero-3-phospho-(1D-myo-inositol) + phosphate. In terms of biological role, phosphoinositide phosphatase which catalyzes the hydrolysis of phosphatidylinositol 4-phosphate (PtdIns(4)P), phosphatidylinositol 3-phosphate (PtdIns(3)P) and has low activity towards phosphatidylinositol-3,5-bisphosphate (PtdIns(3,5)P2). Shows a very robust PtdIns(4)P phosphatase activity when it binds PtdIns(4)P in a 'cis' configuration in the cellular environment, with much less activity seen when it binds PtdIns(4)P in 'trans' configuration. PtdIns(4)P phosphatase activity (when it binds PtdIns(4)P in 'trans' configuration) is enhanced in the presence of PLEKHA3. This Rattus norvegicus (Rat) protein is Phosphatidylinositol-3-phosphatase SAC1 (Sacm1l).